We begin with the raw amino-acid sequence, 432 residues long: Ectonucleoside triphosphate diphosphohydrolase 5 (432 aa).

The N-terminal stretch at 1–24 (MALYQGAAFFMLVASCVCSTVFHR) is a signal peptide. The Proton acceptor role is filled by E175. A glycan (N-linked (GlcNAc...) asparagine) is linked at N235. 2 cysteine pairs are disulfide-bonded: C275–C307 and C367–C381. N-linked (GlcNAc...) asparagine glycosylation is present at N372.

This sequence belongs to the GDA1/CD39 NTPase family. Monomer; active form. Homodimer; disulfide-linked. Homodimers are enzymatically inactive. Ca(2+) is required as a cofactor. The cofactor is Mg(2+). Post-translationally, N-glycosylated; high-mannose type.

It localises to the endoplasmic reticulum. It is found in the secreted. It carries out the reaction a ribonucleoside 5'-diphosphate + H2O = a ribonucleoside 5'-phosphate + phosphate + H(+). It catalyses the reaction GDP + H2O = GMP + phosphate + H(+). The catalysed reaction is UDP + H2O = UMP + phosphate + H(+). The enzyme catalyses IDP + H2O = IMP + phosphate + H(+). It carries out the reaction CDP + H2O = CMP + phosphate + H(+). It catalyses the reaction ADP + H2O = AMP + phosphate + H(+). It functions in the pathway protein modification; protein glycosylation. In terms of biological role, hydrolyzes nucleoside diphosphates with a preference for GDP, IDP and UDP compared to ADP and CDP. In the lumen of the endoplasmic reticulum, hydrolyzes UDP that acts as an end-product feedback inhibitor of the UDP-Glc:glycoprotein glucosyltransferases. UMP can be transported back by an UDP-sugar antiporter to the cytosol where it is consumed to regenerate UDP-glucose. Therefore, it positively regulates protein reglucosylation by clearing UDP from the ER lumen and by promoting the regeneration of UDP-glucose. Protein reglucosylation is essential to proper glycoprotein folding and quality control in the ER. The sequence is that of Ectonucleoside triphosphate diphosphohydrolase 5 (ENTPD5) from Bos taurus (Bovine).